The chain runs to 97 residues: MTKGTSSFGKRRNKTHTLCRRCGSKAYHLQKSTCGKCGYPAKRKRKYNWSAKAKRRNTTGTGRMRHLKIVYRRFRHGFREGTTPKPKRAAVAASSSS.

Lysine 10 carries the post-translational modification N6-acetyllysine. Positions 19, 22, 34, and 37 each coordinate Zn(2+). Residues 19-37 (CRRCGSKAYHLQKSTCGKC) form a C4-type zinc finger. Residues serine 96 and serine 97 each carry the phosphoserine modification.

Belongs to the eukaryotic ribosomal protein eL37 family. As to quaternary structure, component of the large ribosomal subunit.

It localises to the cytoplasm. Functionally, component of the large ribosomal subunit. The ribosome is a large ribonucleoprotein complex responsible for the synthesis of proteins in the cell. This chain is Large ribosomal subunit protein eL37 (RPL37), found in Bos taurus (Bovine).